The following is a 149-amino-acid chain: uncharacterized protein (149 aa).

Residues F12 to T31 form a helical membrane-spanning segment.

Its subcellular location is the membrane. This is an uncharacterized protein from Streptococcus pyogenes serotype M6 (strain ATCC BAA-946 / MGAS10394).